We begin with the raw amino-acid sequence, 97 residues long: Small ribosomal subunit protein bS20 (97 aa).

It belongs to the bacterial ribosomal protein bS20 family.

Binds directly to 16S ribosomal RNA. This chain is Small ribosomal subunit protein bS20, found in Prochlorococcus marinus (strain MIT 9312).